Here is a 308-residue protein sequence, read N- to C-terminus: GDP-L-colitose synthase (308 aa).

NADP(+)-binding positions include 7–13 and 101–104; these read GAGGMVG and LGSS. The active-site Proton donor/acceptor is the tyrosine 132. NADP(+)-binding positions include lysine 136, 160–163, and histidine 176; that span reads PCNL. Substrate-binding residues include lysine 184, tryptophan 199, and arginine 206.

This sequence belongs to the NAD(P)-dependent epimerase/dehydratase family. Fucose synthase subfamily. Homodimer.

The enzyme catalyses GDP-beta-L-colitose + NAD(+) = GDP-4-dehydro-3,6-dideoxy-alpha-D-mannose + NADH + H(+). The catalysed reaction is GDP-beta-L-colitose + NADP(+) = GDP-4-dehydro-3,6-dideoxy-alpha-D-mannose + NADPH + H(+). The protein operates within nucleotide-sugar metabolism; GDP-L-colitose biosynthesis. Involved in the biosynthesis of the L-colitose (3,6-dideoxyl-L-xylo-hexose) present in the O-antigen region of lipopolysaccharides (LPS) where it serves as antigenic determinant and are vital for bacterial defense and survival. Catalyzes the two-step NADP-dependent conversion of GDP-4-keto-3,6-dideoxy-D-mannose to GDP-L-colitose. ColC is a bifunctional enzyme catalyzing the C-5 epimerization of GDP-4-keto-3,6-dideoxy-D-mannose and the subsequent C-4 keto reduction of the resulting L-epimer to give GDP-L-colitose. It can use both NADP(+) and NAD(+) as electron acceptor, with a slight preference for NADP(+). The polypeptide is GDP-L-colitose synthase (Yersinia pseudotuberculosis).